Here is a 795-residue protein sequence, read N- to C-terminus: Phenylalanine--tRNA ligase beta subunit (795 aa).

Positions 39-149 (SGEFSGVVVA…ADAPIGVDIR (111 aa)) constitute a tRNA-binding domain. Residues 402–477 (PKQPIIRLRR…RIYGYNRIPN (76 aa)) enclose the B5 domain. Residues Asp455, Asp461, Glu464, and Glu465 each contribute to the Mg(2+) site. The region spanning 701-794 (SKFPANNRDI…LAQRFQASLR (94 aa)) is the FDX-ACB domain.

The protein belongs to the phenylalanyl-tRNA synthetase beta subunit family. Type 1 subfamily. Tetramer of two alpha and two beta subunits. It depends on Mg(2+) as a cofactor.

Its subcellular location is the cytoplasm. It carries out the reaction tRNA(Phe) + L-phenylalanine + ATP = L-phenylalanyl-tRNA(Phe) + AMP + diphosphate + H(+). This chain is Phenylalanine--tRNA ligase beta subunit, found in Haemophilus ducreyi (strain 35000HP / ATCC 700724).